The primary structure comprises 249 residues: NAD-dependent protein deacylase 2 (249 aa).

The 240-residue stretch at 1–240 folds into the Deacetylase sirtuin-type domain; it reads MNVADLLASS…PRLVEEVKRR (240 aa). 18-37 contributes to the NAD(+) binding site; it reads GAGISAESGVPTFRGPGGLW. 2 residues coordinate substrate: Tyr62 and Arg65. 96–99 serves as a coordination point for NAD(+); it reads QNVD. His114 acts as the Proton acceptor in catalysis. Positions 122, 125, 142, and 145 each coordinate Zn(2+). NAD(+) is bound by residues 182 to 184, 208 to 210, and Ala226; these read GTS and NVE.

Belongs to the sirtuin family. Class III subfamily. Zn(2+) is required as a cofactor.

The protein localises to the cytoplasm. It catalyses the reaction N(6)-acetyl-L-lysyl-[protein] + NAD(+) + H2O = 2''-O-acetyl-ADP-D-ribose + nicotinamide + L-lysyl-[protein]. It carries out the reaction N(6)-succinyl-L-lysyl-[protein] + NAD(+) + H2O = 2''-O-succinyl-ADP-D-ribose + nicotinamide + L-lysyl-[protein]. NAD-dependent lysine deacetylase and desuccinylase that specifically removes acetyl and succinyl groups on target proteins. Modulates the activities of several proteins which are inactive in their acylated form. Deacetylates the N-terminal lysine residue of Alba, the major archaeal chromatin protein and that, in turn, increases Alba's DNA binding affinity, thereby repressing transcription. The sequence is that of NAD-dependent protein deacylase 2 from Pyrobaculum aerophilum (strain ATCC 51768 / DSM 7523 / JCM 9630 / CIP 104966 / NBRC 100827 / IM2).